The following is a 228-amino-acid chain: Small ribosomal subunit protein uS3 (228 aa).

In terms of domain architecture, KH type-2 spans 39–107 (IRKELNEKLK…PVNINIEEIK (69 aa)).

It belongs to the universal ribosomal protein uS3 family. In terms of assembly, part of the 30S ribosomal subunit. Forms a tight complex with proteins S10 and S14.

Its function is as follows. Binds the lower part of the 30S subunit head. Binds mRNA in the 70S ribosome, positioning it for translation. The chain is Small ribosomal subunit protein uS3 from Hydrogenovibrio crunogenus (strain DSM 25203 / XCL-2) (Thiomicrospira crunogena).